Here is a 524-residue protein sequence, read N- to C-terminus: Peptide chain release factor 3 (524 aa).

The 268-residue stretch at 11 to 278 (AKRRTFAIIS…SFVQYAPEPG (268 aa)) folds into the tr-type G domain. GTP-binding positions include 20-27 (SHPDAGKT), 88-92 (DTPGH), and 142-145 (NKLD).

Belongs to the TRAFAC class translation factor GTPase superfamily. Classic translation factor GTPase family. PrfC subfamily.

It is found in the cytoplasm. Functionally, increases the formation of ribosomal termination complexes and stimulates activities of RF-1 and RF-2. It binds guanine nucleotides and has strong preference for UGA stop codons. It may interact directly with the ribosome. The stimulation of RF-1 and RF-2 is significantly reduced by GTP and GDP, but not by GMP. The protein is Peptide chain release factor 3 of Lacticaseibacillus paracasei (strain ATCC 334 / BCRC 17002 / CCUG 31169 / CIP 107868 / KCTC 3260 / NRRL B-441) (Lactobacillus paracasei).